A 374-amino-acid polypeptide reads, in one-letter code: Phospho-N-acetylmuramoyl-pentapeptide-transferase (374 aa).

The next 10 membrane-spanning stretches (helical) occupy residues 3 to 23 (AVIV…PIAI), 52 to 72 (MGGV…HLAL), 85 to 105 (PTIT…VGFI), 125 to 145 (LLGQ…FPST), 170 to 190 (IPAL…VVMA), 201 to 221 (LDGL…LIAF), 244 to 264 (PLEI…FLWW), 271 to 291 (IFMG…MAMS), 294 to 314 (TILL…SVVI), and 350 to 370 (FWII…SEFL).

It belongs to the glycosyltransferase 4 family. MraY subfamily. Mg(2+) is required as a cofactor.

It localises to the cell membrane. The catalysed reaction is UDP-N-acetyl-alpha-D-muramoyl-L-alanyl-gamma-D-glutamyl-meso-2,6-diaminopimeloyl-D-alanyl-D-alanine + di-trans,octa-cis-undecaprenyl phosphate = di-trans,octa-cis-undecaprenyl diphospho-N-acetyl-alpha-D-muramoyl-L-alanyl-D-glutamyl-meso-2,6-diaminopimeloyl-D-alanyl-D-alanine + UMP. It functions in the pathway cell wall biogenesis; peptidoglycan biosynthesis. In terms of biological role, catalyzes the initial step of the lipid cycle reactions in the biosynthesis of the cell wall peptidoglycan: transfers peptidoglycan precursor phospho-MurNAc-pentapeptide from UDP-MurNAc-pentapeptide onto the lipid carrier undecaprenyl phosphate, yielding undecaprenyl-pyrophosphoryl-MurNAc-pentapeptide, known as lipid I. This Salinispora arenicola (strain CNS-205) protein is Phospho-N-acetylmuramoyl-pentapeptide-transferase.